Reading from the N-terminus, the 87-residue chain is CRISPR-associated endoribonuclease Cas2 (87 aa).

Aspartate 8 serves as a coordination point for Mg(2+).

The protein belongs to the CRISPR-associated endoribonuclease Cas2 protein family. In terms of assembly, homodimer, forms a heterotetramer with a Cas1 homodimer. Requires Mg(2+) as cofactor.

Its function is as follows. CRISPR (clustered regularly interspaced short palindromic repeat), is an adaptive immune system that provides protection against mobile genetic elements (viruses, transposable elements and conjugative plasmids). CRISPR clusters contain sequences complementary to antecedent mobile elements and target invading nucleic acids. CRISPR clusters are transcribed and processed into CRISPR RNA (crRNA). Functions as a ssRNA-specific endoribonuclease. Involved in the integration of spacer DNA into the CRISPR cassette. The protein is CRISPR-associated endoribonuclease Cas2 of Dictyoglomus turgidum (strain DSM 6724 / Z-1310).